Reading from the N-terminus, the 180-residue chain is ATP synthase subunit delta 2 (180 aa).

Belongs to the ATPase delta chain family. F-type ATPases have 2 components, F(1) - the catalytic core - and F(0) - the membrane proton channel. F(1) has five subunits: alpha(3), beta(3), gamma(1), delta(1), epsilon(1). F(0) has three main subunits: a(1), b(2) and c(10-14). The alpha and beta chains form an alternating ring which encloses part of the gamma chain. F(1) is attached to F(0) by a central stalk formed by the gamma and epsilon chains, while a peripheral stalk is formed by the delta and b chains.

It localises to the cell inner membrane. Functionally, f(1)F(0) ATP synthase produces ATP from ADP in the presence of a proton or sodium gradient. F-type ATPases consist of two structural domains, F(1) containing the extramembraneous catalytic core and F(0) containing the membrane proton channel, linked together by a central stalk and a peripheral stalk. During catalysis, ATP synthesis in the catalytic domain of F(1) is coupled via a rotary mechanism of the central stalk subunits to proton translocation. In terms of biological role, this protein is part of the stalk that links CF(0) to CF(1). It either transmits conformational changes from CF(0) to CF(1) or is implicated in proton conduction. The chain is ATP synthase subunit delta 2 from Vibrio campbellii (strain ATCC BAA-1116).